The chain runs to 210 residues: Uracil phosphoribosyltransferase (210 aa).

Residues Arg78, Arg103, and 130 to 138 (DPMLATGGS) each bind 5-phospho-alpha-D-ribose 1-diphosphate. Uracil contacts are provided by residues Ile193 and 198–200 (GDA). Residue Asp199 coordinates 5-phospho-alpha-D-ribose 1-diphosphate.

It belongs to the UPRTase family. Mg(2+) serves as cofactor.

It catalyses the reaction UMP + diphosphate = 5-phospho-alpha-D-ribose 1-diphosphate + uracil. It participates in pyrimidine metabolism; UMP biosynthesis via salvage pathway; UMP from uracil: step 1/1. Allosterically activated by GTP. Catalyzes the conversion of uracil and 5-phospho-alpha-D-ribose 1-diphosphate (PRPP) to UMP and diphosphate. In Chromobacterium violaceum (strain ATCC 12472 / DSM 30191 / JCM 1249 / CCUG 213 / NBRC 12614 / NCIMB 9131 / NCTC 9757 / MK), this protein is Uracil phosphoribosyltransferase.